The chain runs to 191 residues: Large ribosomal subunit protein uL6 (191 aa).

This sequence belongs to the universal ribosomal protein uL6 family. As to quaternary structure, component of the large ribosomal subunit. Mature ribosomes consist of a small (40S) and a large (60S) subunit. The 40S subunit contains about 32 different proteins and 1 molecule of RNA (18S). The 60S subunit contains 45 different proteins and 3 molecules of RNA (25S, 5.8S and 5S).

It is found in the cytoplasm. Functionally, component of the ribosome, a large ribonucleoprotein complex responsible for the synthesis of proteins in the cell. The small ribosomal subunit (SSU) binds messenger RNAs (mRNAs) and translates the encoded message by selecting cognate aminoacyl-transfer RNA (tRNA) molecules. The large subunit (LSU) contains the ribosomal catalytic site termed the peptidyl transferase center (PTC), which catalyzes the formation of peptide bonds, thereby polymerizing the amino acids delivered by tRNAs into a polypeptide chain. The nascent polypeptides leave the ribosome through a tunnel in the LSU and interact with protein factors that function in enzymatic processing, targeting, and the membrane insertion of nascent chains at the exit of the ribosomal tunnel. The chain is Large ribosomal subunit protein uL6 from Candida albicans (strain SC5314 / ATCC MYA-2876) (Yeast).